Reading from the N-terminus, the 222-residue chain is MTVVIGVLALQGAFIEHVRHVEKCIVENRDFYEKKLSVMTVKDKNQLAQCDALIIPGGESTAMSLIAERTGFYDDLYAFVHNPSKVTWGTCAGLIYISQQLSNEAKLVKTLNLLKVKVKRNAFGRQAQSSTRICDFSNFIPHCNDFPATFIRAPVIEEVLDPEHVQVLYKLDGKDNGGQELIVAAKQKNNILATSFHPELAENDIRFHDWFIREFVLKNYSK.

58–60 serves as a coordination point for L-glutamine; that stretch reads GES. The active-site Nucleophile is the Cys91. L-glutamine-binding positions include Arg120 and 151 to 152; that span reads IR. Active-site charge relay system residues include His197 and Glu199.

It belongs to the glutaminase PdxT/SNO family.

It catalyses the reaction aldehydo-D-ribose 5-phosphate + D-glyceraldehyde 3-phosphate + L-glutamine = pyridoxal 5'-phosphate + L-glutamate + phosphate + 3 H2O + H(+). It carries out the reaction L-glutamine + H2O = L-glutamate + NH4(+). It functions in the pathway cofactor biosynthesis; pyridoxal 5'-phosphate biosynthesis. Catalyzes the hydrolysis of glutamine to glutamate and ammonia as part of the biosynthesis of pyridoxal 5'-phosphate. The resulting ammonia molecule is channeled to the active site of a SNZ isoform. The chain is Probable pyridoxal 5'-phosphate synthase subunit SNO3 (SNO3) from Saccharomyces cerevisiae (strain ATCC 204508 / S288c) (Baker's yeast).